The chain runs to 284 residues: Hydrogenase expression/formation protein HupQ (284 aa).

Residues 1 to 23 form a disordered region; that stretch reads MIGTQSILPPGFGPGSHGEEDRL.

Belongs to the HupH/HyaF family.

In Azotobacter chroococcum mcd 1, this protein is Hydrogenase expression/formation protein HupQ (hupQ).